We begin with the raw amino-acid sequence, 272 residues long: 3-methyl-2-oxobutanoate hydroxymethyltransferase (272 aa).

Mg(2+) is bound by residues D43 and D82. 3-methyl-2-oxobutanoate-binding positions include 43–44 (DS), D82, and K112. Mg(2+) is bound at residue E114. E179 functions as the Proton acceptor in the catalytic mechanism.

This sequence belongs to the PanB family. In terms of assembly, homodecamer; pentamer of dimers. It depends on Mg(2+) as a cofactor.

Its subcellular location is the cytoplasm. It catalyses the reaction 3-methyl-2-oxobutanoate + (6R)-5,10-methylene-5,6,7,8-tetrahydrofolate + H2O = 2-dehydropantoate + (6S)-5,6,7,8-tetrahydrofolate. It participates in cofactor biosynthesis; (R)-pantothenate biosynthesis; (R)-pantoate from 3-methyl-2-oxobutanoate: step 1/2. Functionally, catalyzes the reversible reaction in which hydroxymethyl group from 5,10-methylenetetrahydrofolate is transferred onto alpha-ketoisovalerate to form ketopantoate. This chain is 3-methyl-2-oxobutanoate hydroxymethyltransferase, found in Staphylococcus aureus (strain JH1).